The sequence spans 337 residues: Probable allantoicase 1 (337 aa).

Belongs to the allantoicase family.

The catalysed reaction is allantoate + H2O = (S)-ureidoglycolate + urea. It functions in the pathway nitrogen metabolism; (S)-allantoin degradation; (S)-ureidoglycolate from allantoate (aminidohydrolase route): step 1/1. This Burkholderia mallei (strain ATCC 23344) protein is Probable allantoicase 1.